The chain runs to 274 residues: Rhamnulose-1-phosphate aldolase (274 aa).

E117 is a catalytic residue. The Zn(2+) site is built by H141, H143, and H212.

It belongs to the aldolase class II family. RhaD subfamily. As to quaternary structure, homotetramer. It depends on Zn(2+) as a cofactor.

Its subcellular location is the cytoplasm. The catalysed reaction is L-rhamnulose 1-phosphate = (S)-lactaldehyde + dihydroxyacetone phosphate. Its pathway is carbohydrate degradation; L-rhamnose degradation; glycerone phosphate from L-rhamnose: step 3/3. Catalyzes the reversible cleavage of L-rhamnulose-1-phosphate to dihydroxyacetone phosphate (DHAP) and L-lactaldehyde. In Escherichia coli O157:H7, this protein is Rhamnulose-1-phosphate aldolase.